The primary structure comprises 132 residues: Interleukin-5 (132 aa).

The N-terminal stretch at 1 to 19 (MHLRLTLVALGAAYVCANA) is a signal peptide. 2 N-linked (GlcNAc...) asparagine glycosylation sites follow: asparagine 74 and asparagine 88.

It belongs to the IL-5 family. In terms of assembly, homodimer; disulfide-linked. Interacts with IL5RA. Interacts with CSF2RB.

The protein localises to the secreted. Homodimeric cytokine expressed predominantly by T-lymphocytes and NK cells that plays an important role in the survival, differentiation, and chemotaxis of eosinophils. Also acts on activated and resting B-cells to induce immunoglobulin production, growth, and differentiation. Mechanistically, exerts its biological effects through a receptor composed of IL5RA subunit and the cytokine receptor common subunit beta/CSF2RB. Binding to the receptor leads to activation of various kinases including LYN, SYK and JAK2 and thereby propagates signals through the RAS-MAPK and JAK-STAT5 pathways respectively. In Ovis aries (Sheep), this protein is Interleukin-5 (IL5).